The primary structure comprises 350 residues: Serine/arginine-rich splicing factor RS40 (350 aa).

RRM domains are found at residues 2 to 74 (KPVF…WTKS) and 97 to 168 (KTLF…YAVK). Composition is skewed to basic and acidic residues over residues 73–82 (KSERGGDKRS) and 167–187 (VKDDDARGNGHSPERRRDRSP). Disordered stretches follow at residues 73–94 (KSERGGDKRSGGGSRRSSSSMR) and 167–350 (VKDD…PADE). Residues S193, S195, and S211 each carry the phosphoserine modification. Basic and acidic residues-rich tracts occupy residues 216–227 (YRKERTSPDYGR) and 240–255 (GSPEYGRDRRGNDSPR). Phosphoserine is present on residues S241, S262, S278, S298, S308, S335, and S340. Over residues 272–289 (NKRERMSPNHSPFKKESP) the composition is skewed to basic and acidic residues. The segment covering 299-308 (PIERRERSRS) has biased composition (basic and acidic residues).

Belongs to the splicing factor SR family. RS subfamily. In terms of assembly, component of the spliceosome. Interacts with SNRNP35. Interacts with CYP59. Interacts with RCF3 and CPL1. Interacts with DRB1/HYL1 and SE. In terms of tissue distribution, highly expressed in roots and flowers. A presumably longer alternatively spliced form is found in leaves, stems and flowers.

It localises to the nucleus. It is found in the nucleus speckle. Required for constitutive and alternative pre-mRNA splicing. Involved in primary miRNA processing and pri-miRNA biogenesis. Binds both intronless and intron-containing pri-miRNAs. The chain is Serine/arginine-rich splicing factor RS40 (RS40) from Arabidopsis thaliana (Mouse-ear cress).